A 209-amino-acid chain; its full sequence is NAD(P)H-quinone oxidoreductase subunit K 2 (209 aa).

Positions 53, 54, 118, and 149 each coordinate [4Fe-4S] cluster.

Belongs to the complex I 20 kDa subunit family. NDH-1 can be composed of about 15 different subunits; different subcomplexes with different compositions have been identified which probably have different functions. The cofactor is [4Fe-4S] cluster.

Its subcellular location is the cellular thylakoid membrane. The catalysed reaction is a plastoquinone + NADH + (n+1) H(+)(in) = a plastoquinol + NAD(+) + n H(+)(out). It carries out the reaction a plastoquinone + NADPH + (n+1) H(+)(in) = a plastoquinol + NADP(+) + n H(+)(out). In terms of biological role, NDH-1 shuttles electrons from an unknown electron donor, via FMN and iron-sulfur (Fe-S) centers, to quinones in the respiratory and/or the photosynthetic chain. The immediate electron acceptor for the enzyme in this species is believed to be plastoquinone. Couples the redox reaction to proton translocation, and thus conserves the redox energy in a proton gradient. Cyanobacterial NDH-1 also plays a role in inorganic carbon-concentration. This chain is NAD(P)H-quinone oxidoreductase subunit K 2, found in Acaryochloris marina (strain MBIC 11017).